Here is a 149-residue protein sequence, read N- to C-terminus: Protein SprT-like (149 aa).

In terms of domain architecture, SprT-like spans 4-144 (TDYVKQVSLE…GLCRGKLLLV (141 aa)). H64 contacts Zn(2+). E65 is an active-site residue. H68 serves as a coordination point for Zn(2+).

Belongs to the SprT family. The cofactor is Zn(2+).

The protein resides in the cytoplasm. The protein is Protein SprT-like of Streptococcus pneumoniae serotype 4 (strain ATCC BAA-334 / TIGR4).